The sequence spans 507 residues: MQSQQQPVFISIILLAINTDAAAPTTAVNAREFGLLCTLVRAEDNLEDRRSAGQAAKEVVALAAKIELILANLKHIERLAAAEPEAAPKESRSDETPEACKASKATVCSQAAQTYKTIRPDEKLALAFLAETTGDLRSTFNVTLKQITAAAASHARYFGENTESRPALDKIKKALYGSPEAKGDAIIESGDGTRSAACGNTDGNAANSAAKRATAALICLCGGDNTNTGNDACFTQTTADINYAKKGGEVERAWTEIRQKCKAGAAANKVTAAQLKAAAAELAALIHQKRGEKAVAGLLGAAQINNGAVDCDGSEANGKGSCVILSTSASKYKVETPDWLNALEAAIADLEQEQIELDNGRKAEAQILALNSSXTTLLAQAVEPTKQPPAKAAAAPEKKSNPQKDCNKNTKKRDCKEGDGCKWSSTEATEGAFCKPKDGEGQTSAAGAGDAGASDTEAKKCSDKKKEEECKSPNCKWDGKECKDSSILANKQFALSVASAAFVALLF.

An N-terminal signal peptide occupies residues 1–21 (MQSQQQPVFISIILLAINTDA). Over residues 83–95 (EPEAAPKESRSDE) the composition is skewed to basic and acidic residues. Residues 83–102 (EPEAAPKESRSDETPEACKA) form a disordered region. 2 N-linked (GlcNAc...) asparagine glycosylation sites follow: asparagine 141 and asparagine 371. The span at 384 to 395 (PTKQPPAKAAAA) shows a compositional bias: low complexity. The segment at 384 to 474 (PTKQPPAKAA…KKEEECKSPN (91 aa)) is disordered. Basic and acidic residues predominate over residues 396–420 (PEKKSNPQKDCNKNTKKRDCKEGDG). Residues 444-455 (SAAGAGDAGASD) show a composition bias toward low complexity. Basic and acidic residues predominate over residues 456 to 474 (TEAKKCSDKKKEEECKSPN). Aspartate 484 carries GPI-anchor amidated aspartate lipidation. Positions 485 to 507 (SSILANKQFALSVASAAFVALLF) are cleaved as a propeptide — removed in mature form.

Its subcellular location is the cell membrane. Its function is as follows. VSG forms a coat on the surface of the parasite. The trypanosome evades the immune response of the host by expressing a series of antigenically distinct VSGs from an estimated 1000 VSG genes. In Trypanosoma brucei brucei, this protein is Variant surface glycoprotein ILTAT 1.25.